The sequence spans 182 residues: Large ribosomal subunit protein bL17m (182 aa).

It belongs to the bacterial ribosomal protein bL17 family.

It is found in the mitochondrion. This chain is Large ribosomal subunit protein bL17m (mrpl17), found in Dictyostelium discoideum (Social amoeba).